The following is a 584-amino-acid chain: MWGVSSLDYDDDEELTRLLAVWDDEPLSLFLMNTFLLHQEGFRNLPFTVLRLSYAYRIFAKMLRAHGTPVAEDFMTRVAALARDEGLRDILGQRHAAEASRAEIAEALERVAERCDDRHGGSDDYVWLSRLLDLAPNYRQVELFQLLEKESRGQSRNSVWHLLRMDTVSATKFYEAFVSGCLPGAAAADGSGGGGSHYTGSRAGVSPGIQFGIKHEGLVKTLVECYVMHGREPVRDGLGLLIDPTSGLLGASMDLCFGVLKQGSGRTLLVEPCARVYEIKCRYKYLRKKEDPFVQNVLRRHDAAAVASLLQSHPVPGVEFRGERETPSAREFLLSHDAALFRATLKRARPLKPPEPLREYLADLLYLNKAECSEVIVFDAKHLNDDNSDGDATITINASLGLAAGDAAGGGADHHLRGSPGDSPPPIPFEDENTPELLGRLNVYEVARFSLPAFVNPRHQYYFQMLIQQYVLSQYYIKKHPDPERIDFRDLPTVYLVSAIFREREESELGCELLAGGRVFHCDHIPLLLIVTPVVFDPQFTRHAVSTVLDRWSRDLSRKTNLPIWVPNSANEYVVSSVPRPVSP.

Residues 409-429 are disordered; the sequence is GGGADHHLRGSPGDSPPPIPF.

Belongs to the herpesviridae alkaline nuclease family. In terms of assembly, interacts with major DNA-binding protein; this interaction increases the nuclease processivity of the alkaline exonuclease.

It localises to the host nucleus. Its subcellular location is the host cytoplasm. In terms of biological role, plays a role in processing non linear or branched viral DNA intermediates in order to promote the production of mature packaged unit-length linear progeny viral DNA molecules. Exhibits endonuclease and exonuclease activities and accepts both double-stranded and single-stranded DNA as substrate. Exonuclease digestion of DNA is in the 5'-&gt; 3' direction and the products are 5'-monophosphate nucleosides. Additionally, forms a recombinase with the major DNA-binding protein, which displays strand exchange activity. The sequence is that of Alkaline nuclease (UL98) from Homo sapiens (Human).